The following is a 50-amino-acid chain: KFCERPSGTWAGVCGNNGKCKDQCIRLEKAKHGSCKYKFPAHRCVCYYEC.

4 disulfides stabilise this stretch: cysteine 3/cysteine 50, cysteine 14/cysteine 35, cysteine 20/cysteine 44, and cysteine 24/cysteine 46.

As to expression, detected in seeds (at protein level).

The protein localises to the secreted. In terms of biological role, antimicrobial peptide with antifungal activity. The chain is Defensin D4 from Nigella sativa (Black cumin).